Consider the following 983-residue polypeptide: Bifunctional glutamine synthetase adenylyltransferase/adenylyl-removing enzyme (983 aa).

The segment at 1-468 (MTVENAKALF…KQYAALFAQA (468 aa)) is adenylyl removase. The interval 473 to 983 (AASGNLVFTG…FDKLVGHGAD (511 aa)) is adenylyl transferase.

This sequence belongs to the GlnE family. The cofactor is Mg(2+).

The catalysed reaction is [glutamine synthetase]-O(4)-(5'-adenylyl)-L-tyrosine + phosphate = [glutamine synthetase]-L-tyrosine + ADP. The enzyme catalyses [glutamine synthetase]-L-tyrosine + ATP = [glutamine synthetase]-O(4)-(5'-adenylyl)-L-tyrosine + diphosphate. In terms of biological role, involved in the regulation of glutamine synthetase GlnA, a key enzyme in the process to assimilate ammonia. When cellular nitrogen levels are high, the C-terminal adenylyl transferase (AT) inactivates GlnA by covalent transfer of an adenylyl group from ATP to specific tyrosine residue of GlnA, thus reducing its activity. Conversely, when nitrogen levels are low, the N-terminal adenylyl removase (AR) activates GlnA by removing the adenylyl group by phosphorolysis, increasing its activity. The regulatory region of GlnE binds the signal transduction protein PII (GlnB) which indicates the nitrogen status of the cell. The polypeptide is Bifunctional glutamine synthetase adenylyltransferase/adenylyl-removing enzyme (Brucella suis biovar 1 (strain 1330)).